The sequence spans 924 residues: Aminopeptidase 2 (924 aa).

Positions Met-1–Leu-45 are cleaved as a signal peptide. The propeptide occupies Leu-46–Leu-57. N-acetylserine; partial is present on Ser-58. A glycan (N-linked (GlcNAc...) asparagine) is linked at Asn-92. Glu-194 contacts substrate. An N-linked (GlcNAc...) asparagine glycan is attached at Asn-229. Gly-327–Asn-331 contacts substrate. A Zn(2+)-binding site is contributed by His-363. Glu-364 serves as the catalytic Proton acceptor. Positions 367 and 386 each coordinate Zn(2+).

Belongs to the peptidase M1 family. It depends on Zn(2+) as a cofactor.

Its subcellular location is the secreted. It localises to the cell wall. Inactivated by metal-chelating agents phenanthroline and EDTA. Inhibited by bestatin, an aminopeptidase inhibitor. Not inhibited by pepstatin A and PMSF, inhibitors of aspartic and the serine proteases, respectively. Not inhibited by carboxypeptidase inhibitor. Metalloprotease that specifically hydrolyzes peptides with N-terminal alanine, arginine and leucine residues. This is Aminopeptidase 2 (APE2) from Candida albicans (strain SC5314 / ATCC MYA-2876) (Yeast).